A 259-amino-acid polypeptide reads, in one-letter code: Type III pantothenate kinase (259 aa).

Residue 9-16 coordinates ATP; that stretch reads DAGNSRIK. Residues tyrosine 93 and 100 to 103 contribute to the substrate site; that span reads GSDR. Aspartate 102 (proton acceptor) is an active-site residue. Threonine 126 is a binding site for ATP. Residue threonine 190 coordinates substrate.

This sequence belongs to the type III pantothenate kinase family. In terms of assembly, homodimer. Requires NH4(+) as cofactor. The cofactor is K(+).

It is found in the cytoplasm. The catalysed reaction is (R)-pantothenate + ATP = (R)-4'-phosphopantothenate + ADP + H(+). It functions in the pathway cofactor biosynthesis; coenzyme A biosynthesis; CoA from (R)-pantothenate: step 1/5. Catalyzes the phosphorylation of pantothenate (Pan), the first step in CoA biosynthesis. The protein is Type III pantothenate kinase of Burkholderia thailandensis (strain ATCC 700388 / DSM 13276 / CCUG 48851 / CIP 106301 / E264).